Consider the following 306-residue polypeptide: Homoserine kinase (306 aa).

95 to 105 contributes to the ATP binding site; the sequence is PHSRGLGSSAA.

The protein belongs to the GHMP kinase family. Homoserine kinase subfamily.

The protein localises to the cytoplasm. It carries out the reaction L-homoserine + ATP = O-phospho-L-homoserine + ADP + H(+). Its pathway is amino-acid biosynthesis; L-threonine biosynthesis; L-threonine from L-aspartate: step 4/5. In terms of biological role, catalyzes the ATP-dependent phosphorylation of L-homoserine to L-homoserine phosphate. In Mycobacteroides abscessus (strain ATCC 19977 / DSM 44196 / CCUG 20993 / CIP 104536 / JCM 13569 / NCTC 13031 / TMC 1543 / L948) (Mycobacterium abscessus), this protein is Homoserine kinase.